The sequence spans 307 residues: Agmatinase (307 aa).

The Mn(2+) site is built by histidine 128, aspartate 151, histidine 153, aspartate 155, aspartate 232, and aspartate 234.

Belongs to the arginase family. Agmatinase subfamily. Requires Mn(2+) as cofactor.

It catalyses the reaction agmatine + H2O = urea + putrescine. It participates in amine and polyamine biosynthesis; putrescine biosynthesis via agmatine pathway; putrescine from agmatine: step 1/1. Its function is as follows. Catalyzes the formation of putrescine from agmatine. The polypeptide is Agmatinase (Neisseria meningitidis serogroup A / serotype 4A (strain DSM 15465 / Z2491)).